The following is a 152-amino-acid chain: Large ribosomal subunit protein uL13 (152 aa).

This sequence belongs to the universal ribosomal protein uL13 family. As to quaternary structure, part of the 50S ribosomal subunit.

In terms of biological role, this protein is one of the early assembly proteins of the 50S ribosomal subunit, although it is not seen to bind rRNA by itself. It is important during the early stages of 50S assembly. The protein is Large ribosomal subunit protein uL13 of Neorickettsia sennetsu (strain ATCC VR-367 / Miyayama) (Ehrlichia sennetsu).